The following is a 113-amino-acid chain: Protein NATD1 (113 aa).

An N-acetyltransferase domain is found at E22–Q112.

Belongs to the NATD1 family.

The chain is Protein NATD1 (NATD1) from Homo sapiens (Human).